We begin with the raw amino-acid sequence, 236 residues long: Lipoarabinomannan carrier protein LprG (236 aa).

Positions 1-26 (MRTPRRHCRRIAVLAAVSIAATVVAG) are cleaved as a signal peptide. C27 carries N-palmitoyl cysteine lipidation. Residue C27 is the site of S-diacylglycerol cysteine attachment.

Belongs to the LppX/LprAFG lipoprotein family. In terms of processing, modified by Lgt on Cys-27 with an S-linked diacylglyceral, signal peptide is removed by LspA, Cys-27 is further modifed with a fatty acid on its amino group by Lnt yielding a triacylated protein.

Its subcellular location is the cell inner membrane. It localises to the secreted. The protein localises to the cell wall. Helps membrane protein Mb1445c (P55) transport triacylglycerides (TAG) across the inner cell membrane into the periplasm and probably ultimately to the outer membrane. Binds TAG in its hydrophobic cavity and transfers it between lipid bilayers. TAG probably regulates lipid metabolism and growth regulation and plays a structural role in the outer membrane. Binds di- and triacylated phosphatidyl-myo-inositol mannosides (PIMs), and glycolipid lipoglycan modulins lipoarabinomannan (LAM) and lipomannan (LM), facilitating their recognition by TLR2. Required for activity of drug efflux transporter Mb1445c. Required, probably with Mb1445c, for normal surface localization of LAM. In terms of biological role, constitutes a host TLR2 agonist (toll-like receptor). The chain is Lipoarabinomannan carrier protein LprG from Mycobacterium bovis (strain ATCC BAA-935 / AF2122/97).